A 203-amino-acid polypeptide reads, in one-letter code: UPF0637 protein EF_3078 (203 aa).

The protein belongs to the UPF0637 family.

This chain is UPF0637 protein EF_3078, found in Enterococcus faecalis (strain ATCC 700802 / V583).